The chain runs to 303 residues: N-acetyl-D-glucosamine kinase (303 aa).

ATP-binding positions include 4-11 (GFDIGGTK) and 133-140 (GVGGGLVL). Zn(2+) is bound by residues His157, Cys177, Cys179, and Cys184.

It belongs to the ROK (NagC/XylR) family. NagK subfamily.

The enzyme catalyses N-acetyl-D-glucosamine + ATP = N-acetyl-D-glucosamine 6-phosphate + ADP + H(+). It participates in cell wall biogenesis; peptidoglycan recycling. Catalyzes the phosphorylation of N-acetyl-D-glucosamine (GlcNAc) derived from cell-wall degradation, yielding GlcNAc-6-P. This Salmonella gallinarum (strain 287/91 / NCTC 13346) protein is N-acetyl-D-glucosamine kinase.